A 169-amino-acid polypeptide reads, in one-letter code: MALLNILQYPDPRLHKVAKPVAVVDDRIRKLVADMAETMYDAPGIGLAATQVDVHERVITIDVSESRDELRVFINPEIVWASEARKVWDEGCLSVPDIYDKVERPDRVRVRALNEKGESFELETDGLLAVCIQHEMDHLMGKVFVEYLSPLKQNRIKIKLKKHQLERAR.

Cysteine 92 and histidine 134 together coordinate Fe cation. Glutamate 135 is an active-site residue. Histidine 138 lines the Fe cation pocket.

It belongs to the polypeptide deformylase family. Requires Fe(2+) as cofactor.

It carries out the reaction N-terminal N-formyl-L-methionyl-[peptide] + H2O = N-terminal L-methionyl-[peptide] + formate. Its function is as follows. Removes the formyl group from the N-terminal Met of newly synthesized proteins. Requires at least a dipeptide for an efficient rate of reaction. N-terminal L-methionine is a prerequisite for activity but the enzyme has broad specificity at other positions. The chain is Peptide deformylase 1 from Ralstonia nicotianae (strain ATCC BAA-1114 / GMI1000) (Ralstonia solanacearum).